Here is a 170-residue protein sequence, read N- to C-terminus: Heat shock protein beta-7 (170 aa).

Positions Met-1–Pro-39 are disordered. The segment at Met-1 to Gly-71 is required for localization to SC35 splicing speckles. Residues His-16–Ser-31 are compositionally biased toward low complexity. The 109-residue stretch at Pro-62–Ile-170 folds into the sHSP domain.

The protein belongs to the small heat shock protein (HSP20) family. In terms of assembly, interacts with C-terminal domain of actin-binding protein 280. As to expression, isoform 1 is highly expressed in adult and fetal heart, skeletal muscle, and at a much lower levels in adipose tissue and in aorta. Undetectable in other tissues. Isoform 2 and isoform 3 are poorly detected in heart.

The protein resides in the cytoplasm. The protein localises to the nucleus. It localises to the cajal body. This is Heat shock protein beta-7 (HSPB7) from Homo sapiens (Human).